We begin with the raw amino-acid sequence, 447 residues long: Probable 3-deoxy-D-manno-octulosonic acid transferase, mitochondrial (447 aa).

The N-terminal 32 residues, 1–32 (MKLGVFVYRLYRALTYGVSPLIHLHIRWRRLR), are a transit peptide targeting the mitochondrion. Glu-66 serves as the catalytic Proton acceptor. Residues 278–279 (PR), 320–322 (LGE), and 347–350 (NLSE) each bind CMP.

Belongs to the glycosyltransferase group 1 family. Glycosyltransferase 30 subfamily. As to expression, expressed in leaves, stems and flowers.

The protein localises to the mitochondrion. The catalysed reaction is lipid IVA (E. coli) + CMP-3-deoxy-beta-D-manno-octulosonate = alpha-Kdo-(2-&gt;6)-lipid IVA (E. coli) + CMP + H(+). It carries out the reaction alpha-Kdo-(2-&gt;6)-lipid IVA (E. coli) + CMP-3-deoxy-beta-D-manno-octulosonate = alpha-Kdo-(2-&gt;4)-alpha-Kdo-(2-&gt;6)-lipid IVA (E. coli) + CMP + H(+). It participates in glycolipid biosynthesis; KDO(2)-lipid A biosynthesis; KDO(2)-lipid A from CMP-3-deoxy-D-manno-octulosonate and lipid IV(A): step 1/4. It functions in the pathway glycolipid biosynthesis; KDO(2)-lipid A biosynthesis; KDO(2)-lipid A from CMP-3-deoxy-D-manno-octulosonate and lipid IV(A): step 2/4. In terms of biological role, involved in the biosynthesis of lipid A, a phosphorylated glycolipid that in bacteria anchors the lipopolysaccharide to the outer membrane of the cell. Catalyzes the transfer of two 3-deoxy-D-manno-octulosonate (Kdo) residues from CMP-Kdo to lipid IV(A), the tetraacyldisaccharide-1,4'-bisphosphate precursor of lipid A. Lipid A-like molecules in plants may serve as structural components of the outer membranes of mitochondria and/or chloroplasts, or may be involved in signal transduction or plant defense responses. This Arabidopsis thaliana (Mouse-ear cress) protein is Probable 3-deoxy-D-manno-octulosonic acid transferase, mitochondrial (KDTA).